A 306-amino-acid polypeptide reads, in one-letter code: Beta-lactamase (306 aa).

The signal sequence occupies residues 1-34 (MNVKRKATLKFGICIGLLCVSFTGFNSLFGSTHA). Residue serine 89 is the Acyl-ester intermediate of the active site. 251 to 253 (KSG) contributes to the substrate binding site.

This sequence belongs to the class-A beta-lactamase family.

It carries out the reaction a beta-lactam + H2O = a substituted beta-amino acid. Its function is as follows. This protein is a beta-lactamase with a substrate specificity for penicillins. The polypeptide is Beta-lactamase (penP) (Bacillus amyloliquefaciens (Bacillus velezensis)).